Consider the following 346-residue polypeptide: FMRFamide-related peptides type HF-1 (346 aa).

The first 19 residues, 1–19 (MTSLCLTIAPAVLSLICLS), serve as a signal peptide directing secretion. Positions 20 to 45 (SYGWAEDNNGIHTLDDGDNDPFFRHN) are excised as a propeptide. Position 51 is a phenylalanine amide (Phe51). Positions 54–94 (AFVPLWDNADDSLVRKNLLTHWSEFPLSPALSSSDVFSRNS) are excised as a propeptide. A Phenylalanine amide modification is found at Phe100. The propeptide occupies 103–109 (SYPPYQD). Phenylalanine amide is present on Phe115. Positions 118-203 (SHQPDIDEYL…EILSNEDDLE (86 aa)) are excised as a propeptide. The disordered stretch occupies residues 137–185 (YRKRRSEDGDSKEDGLNRVARSADANQQSKNTQSNKFGKDLQKRETKKE). Residues 141-152 (RSEDGDSKEDGL) are compositionally biased toward basic and acidic residues. The segment covering 160 to 172 (DANQQSKNTQSNK) has biased composition (polar residues). A compositionally biased stretch (basic and acidic residues) spans 173 to 185 (FGKDLQKRETKKE). Phenylalanine amide occurs at positions 209 and 216. The propeptide occupies 219 to 226 (GDEDESYD). The residue at position 232 (Phe232) is a Phenylalanine amide. A propeptide spanning residues 235 to 243 (SLRHDQEFE) is cleaved from the precursor. 2 positions are modified to phenylalanine amide: Phe249 and Phe256. The propeptide occupies 259 to 267 (GDEDDAREE). Phe273 bears the Phenylalanine amide mark. Positions 276 to 283 (SSNEDEDI) are excised as a propeptide. Phe290 bears the Phenylalanine amide mark. A propeptide spanning residues 293 to 301 (SGNEDGDVD) is cleaved from the precursor. Residues Phe307 and Phe314 each carry the phenylalanine amide modification. A propeptide spanning residues 317–325 (SEKEDGDVD) is cleaved from the precursor. Phenylalanine amide occurs at positions 331 and 338. Residues 341–346 (GDSETS) constitute a propeptide that is removed on maturation.

The protein belongs to the FARP (FMRFamide related peptide) family. In terms of tissue distribution, central nervous system.

The protein resides in the secreted. Functionally, can function as both cardioregulatory hormones and transmitters and may regulate cardiovascular function. This Cornu aspersum (Brown garden snail) protein is FMRFamide-related peptides type HF-1.